A 338-amino-acid chain; its full sequence is Ketol-acid reductoisomerase (NADP(+)) (338 aa).

The KARI N-terminal Rossmann domain maps to 1–181 (MNVFYDKDAD…GGGRAGIIET (181 aa)). Residues 24-27 (YGSQ), Arg47, and Ser52 contribute to the NADP(+) site. His107 is a catalytic residue. Gly133 contributes to the NADP(+) binding site. In terms of domain architecture, KARI C-terminal knotted spans 182-327 (NFREETETDL…AKLRAMMPWI (146 aa)). Mg(2+)-binding residues include Asp190, Glu194, Glu226, and Glu230. Residue Ser251 coordinates substrate.

It belongs to the ketol-acid reductoisomerase family. It depends on Mg(2+) as a cofactor.

It catalyses the reaction (2R)-2,3-dihydroxy-3-methylbutanoate + NADP(+) = (2S)-2-acetolactate + NADPH + H(+). It carries out the reaction (2R,3R)-2,3-dihydroxy-3-methylpentanoate + NADP(+) = (S)-2-ethyl-2-hydroxy-3-oxobutanoate + NADPH + H(+). Its pathway is amino-acid biosynthesis; L-isoleucine biosynthesis; L-isoleucine from 2-oxobutanoate: step 2/4. It participates in amino-acid biosynthesis; L-valine biosynthesis; L-valine from pyruvate: step 2/4. Involved in the biosynthesis of branched-chain amino acids (BCAA). Catalyzes an alkyl-migration followed by a ketol-acid reduction of (S)-2-acetolactate (S2AL) to yield (R)-2,3-dihydroxy-isovalerate. In the isomerase reaction, S2AL is rearranged via a Mg-dependent methyl migration to produce 3-hydroxy-3-methyl-2-ketobutyrate (HMKB). In the reductase reaction, this 2-ketoacid undergoes a metal-dependent reduction by NADPH to yield (R)-2,3-dihydroxy-isovalerate. The protein is Ketol-acid reductoisomerase (NADP(+)) of Burkholderia cenocepacia (strain HI2424).